The primary structure comprises 206 residues: Small ribosomal subunit protein uS4 (206 aa).

The 61-residue stretch at glycine 96 to lysine 156 folds into the S4 RNA-binding domain.

This sequence belongs to the universal ribosomal protein uS4 family. In terms of assembly, part of the 30S ribosomal subunit. Contacts protein S5. The interaction surface between S4 and S5 is involved in control of translational fidelity.

In terms of biological role, one of the primary rRNA binding proteins, it binds directly to 16S rRNA where it nucleates assembly of the body of the 30S subunit. With S5 and S12 plays an important role in translational accuracy. This Klebsiella pneumoniae (strain 342) protein is Small ribosomal subunit protein uS4.